Reading from the N-terminus, the 92-residue chain is Ezrin (92 aa).

One can recognise an FERM domain in the interval Gln-1 to Arg-72. Lys-15 is modified (N6-acetyllysine). The tract at residues Glu-42 to Lys-92 is interaction with SCYL3.

Interacts with PALS1 and NHERF2. Found in a complex with EZR, PODXL and NHERF2. Interacts with MCC, PLEKHG6, PODXL, SCYL3/PACE1, NHERF1 and TMEM8B. Interacts (when phosphorylated) with FES/FPS. Interacts with dimeric S100P, the interaction may be activating through unmasking of F-actin binding sites. Identified in complexes that contain VIM, EZR, AHNAK, BFSP1, BFSP2, ANK2, PLEC, PRX and spectrin. Detected in a complex composed of at least EZR, AHNAK, PPL and PRX. Interacts with PDPN (via cytoplasmic domain); activates RHOA and promotes epithelial-mesenchymal transition. Interacts with SPN/CD43 cytoplasmic tail, CD44 and ICAM2. Interacts with CLIC5; may work together in a complex which also includes RDX and MYO6 to stabilize linkages between the plasma membrane and subjacent actin cytoskeleton at the base of stereocilia. Post-translationally, phosphorylated by tyrosine-protein kinases. Phosphorylation by ROCK2 suppresses the head-to-tail association of the N-terminal and C-terminal halves resulting in an opened conformation which is capable of actin and membrane-binding. S-nitrosylation is induced by interferon-gamma and oxidatively-modified low-densitity lipoprotein (LDL(ox)) possibly implicating the iNOS-S100A8/9 transnitrosylase complex.

Its subcellular location is the apical cell membrane. It is found in the cell projection. The protein resides in the microvillus membrane. The protein localises to the ruffle membrane. It localises to the cytoplasm. Its subcellular location is the cell cortex. It is found in the cytoskeleton. The protein resides in the microvillus. With respect to regulation, a head-to-tail association, of the N-terminal and C-terminal halves results in a closed conformation (inactive form) which is incapable of actin or membrane-binding. In terms of biological role, probably involved in connections of major cytoskeletal structures to the plasma membrane. In epithelial cells, required for the formation of microvilli and membrane ruffles on the apical pole. Along with PLEKHG6, required for normal macropinocytosis. The chain is Ezrin from Mesocricetus auratus (Golden hamster).